A 672-amino-acid polypeptide reads, in one-letter code: DNA ligase (672 aa).

Residues 35–39 (DAQYD), 84–85 (SL), and Glu115 contribute to the NAD(+) site. Catalysis depends on Lys117, which acts as the N6-AMP-lysine intermediate. Arg138, Glu178, Lys294, and Lys318 together coordinate NAD(+). Zn(2+)-binding residues include Cys412, Cys415, Cys430, and Cys435. Residues 592–672 (ATGGPFVGKS…AFLQMLQTNA (81 aa)) enclose the BRCT domain.

This sequence belongs to the NAD-dependent DNA ligase family. LigA subfamily. Requires Mg(2+) as cofactor. Mn(2+) serves as cofactor.

It carries out the reaction NAD(+) + (deoxyribonucleotide)n-3'-hydroxyl + 5'-phospho-(deoxyribonucleotide)m = (deoxyribonucleotide)n+m + AMP + beta-nicotinamide D-nucleotide.. In terms of biological role, DNA ligase that catalyzes the formation of phosphodiester linkages between 5'-phosphoryl and 3'-hydroxyl groups in double-stranded DNA using NAD as a coenzyme and as the energy source for the reaction. It is essential for DNA replication and repair of damaged DNA. In Myxococcus xanthus (strain DK1622), this protein is DNA ligase.